The sequence spans 385 residues: Eukaryotic translation initiation factor 3 subunit M (385 aa).

A PCI domain is found at 180–342 (NSELASKVMI…RKVHISSTMH (163 aa)).

It belongs to the eIF-3 subunit M family. Component of the eukaryotic translation initiation factor 3 (eIF-3) complex.

It is found in the cytoplasm. Functionally, component of the eukaryotic translation initiation factor 3 (eIF-3) complex, which is involved in protein synthesis of a specialized repertoire of mRNAs and, together with other initiation factors, stimulates binding of mRNA and methionyl-tRNAi to the 40S ribosome. The eIF-3 complex specifically targets and initiates translation of a subset of mRNAs involved in cell proliferation. This chain is Eukaryotic translation initiation factor 3 subunit M, found in Anopheles gambiae (African malaria mosquito).